The following is a 435-amino-acid chain: MTILVLGINHKTATVALREKVAFSEEKRLSALNQIEQLKLAQSTVILSTCNRTEVYLHNKFIQPEQNSAWIDECVAWFAAIHQIQLTDLQDCLYFYQNQQAVTHLMRVACGLDSLILGEPQILGQVKQAYQLAEEYYQRAHGLGKSAVISSELSRLFQKTFSTAKRVRTETNIGESAVSVAYAACSLGRQIFESLQELTILLVGAGETIELAARHLLRHGVKKLMIANRTRARAEALVAKLESPFIEILSLSELQDGLNQADIVISSTGSPTTLISYEMMKQAQIQRRYRPVLIVDIAVPRDVEESIVKLDSVYHYTVDDLQNIINHNLSEREKASEQAEEIIAEECAAFFEWLKVRQASNLIRTYRESADEIRQELLEKAQFSLSQGESADKILDEFSTKLMNKLLHSPTLVMQTMVKQGDSRGLQNFLSVIKK.

Residues 49–52 (TCNR), Ser114, 119–121 (EPQ), and Gln125 contribute to the substrate site. Residue Cys50 is the Nucleophile of the active site. 204–209 (GAGETI) is a binding site for NADP(+).

This sequence belongs to the glutamyl-tRNA reductase family. In terms of assembly, homodimer.

The enzyme catalyses (S)-4-amino-5-oxopentanoate + tRNA(Glu) + NADP(+) = L-glutamyl-tRNA(Glu) + NADPH + H(+). It functions in the pathway porphyrin-containing compound metabolism; protoporphyrin-IX biosynthesis; 5-aminolevulinate from L-glutamyl-tRNA(Glu): step 1/2. Catalyzes the NADPH-dependent reduction of glutamyl-tRNA(Glu) to glutamate 1-semialdehyde (GSA). The protein is Glutamyl-tRNA reductase of Actinobacillus succinogenes (strain ATCC 55618 / DSM 22257 / CCUG 43843 / 130Z).